A 141-amino-acid chain; its full sequence is Hemoglobin subunit alpha (141 aa).

The region spanning 1–141 is the Globin domain; it reads VLSDNDKTNV…VSTVLTSKYR (141 aa). S3 bears the Phosphoserine mark. Residue K7 is modified to N6-succinyllysine. T8 carries the phosphothreonine modification. K11 is modified (N6-succinyllysine). K16 is subject to N6-acetyllysine; alternate. N6-succinyllysine; alternate is present on K16. At Y24 the chain carries Phosphotyrosine. Phosphoserine is present on S35. K40 carries the N6-succinyllysine modification. Residue H58 participates in O2 binding. H87 provides a ligand contact to heme b. At S102 the chain carries Phosphoserine. At T108 the chain carries Phosphothreonine. S124 carries the post-translational modification Phosphoserine. Phosphothreonine is present on residues T134 and T137. At S138 the chain carries Phosphoserine.

The protein belongs to the globin family. As to quaternary structure, heterotetramer of two alpha chains and two beta chains. In terms of tissue distribution, red blood cells.

In terms of biological role, involved in oxygen transport from the lung to the various peripheral tissues. Functionally, hemopressin acts as an antagonist peptide of the cannabinoid receptor CNR1. Hemopressin-binding efficiently blocks cannabinoid receptor CNR1 and subsequent signaling. This Loxodonta africana (African elephant) protein is Hemoglobin subunit alpha (HBA).